A 55-amino-acid polypeptide reads, in one-letter code: Large ribosomal subunit protein bL33 (55 aa).

It belongs to the bacterial ribosomal protein bL33 family.

This is Large ribosomal subunit protein bL33 from Burkholderia ambifaria (strain MC40-6).